The sequence spans 681 residues: uncharacterized protein (681 aa).

The protein in the N-terminal section; belongs to the purine/pyrimidine phosphoribosyltransferase family.

This is an uncharacterized protein from Mycobacterium tuberculosis (strain CDC 1551 / Oshkosh).